A 3567-amino-acid polypeptide reads, in one-letter code: Zinc finger homeobox protein 4 (3567 aa).

M1 bears the N-acetylmethionine mark. Disordered regions lie at residues 1–54 (METC…LKTD), 425–480 (LSHS…AYSN), 522–545 (TSSS…VRAS), and 565–611 (SKDS…SPGS). Positions 9 to 28 (ISRQENGQSTSKLCGTTQLD) are enriched in polar residues. Composition is skewed to basic and acidic residues over residues 39–54 (EPDR…LKTD) and 434–452 (KMSE…KESN). Over residues 468-480 (EPGDEDEEDAYSN) the composition is skewed to acidic residues. C2H2-type zinc fingers lie at residues 613–636 (IECP…TMMH), 644–667 (LKCP…KEKH), and 699–723 (FRCE…SDKH). Residues 767–789 (WRCEVCDYETNVARNLRIHMTSE) form a C2H2-type 4; degenerate zinc finger. 3 C2H2-type zinc fingers span residues 917–941 (YQCK…TDKH), 973–995 (LKCN…TTNH), and 1021–1045 (YYCA…SVKH). Positions 1098 to 1160 (EQHEEAEGAI…EDVATKRSKP (63 aa)) are disordered. 2 stretches are compositionally biased toward basic and acidic residues: residues 1120-1132 (TSER…KNSN) and 1148-1160 (AKEE…RSKP). A Glycyl lysine isopeptide (Lys-Gly) (interchain with G-Cter in SUMO2) cross-link involves residue K1149. C2H2-type zinc fingers lie at residues 1172–1195 (YQCP…LSQH) and 1201–1224 (ICCP…THLH). Residues 1254-1324 (AASEKSERDT…WNKNSSKDVK (71 aa)) form a disordered region. Residues 1281-1310 (MDDKSMAGLEDSKANVEVKNEEQKPTKEPL) are compositionally biased toward basic and acidic residues. Residues K1299 and K1324 each participate in a glycyl lysine isopeptide (Lys-Gly) (interchain with G-Cter in SUMO2) cross-link. C2H2-type zinc fingers lie at residues 1352-1374 (YRCN…SQYH) and 1380-1403 (TMCN…EAGH). The tract at residues 1429 to 1480 (ETMSQDDHGLEQEMEREYEVDHEGKASPVGSDSSSIPDDMGSEPKRTLPFRK) is disordered. Residues 1433 to 1453 (QDDHGLEQEMEREYEVDHEGK) are compositionally biased toward basic and acidic residues. A C2H2-type 12 zinc finger spans residues 1496 to 1522 (YKCTVCKESFTQKNILLVHYNSVSHLH). Residue K1546 forms a Glycyl lysine isopeptide (Lys-Gly) (interchain with G-Cter in SUMO2) linkage. The C2H2-type 13 zinc-finger motif lies at 1548-1572 (YKCSICNVAYSQSSTLEIHMRSVLH). Low complexity-rich tracts occupy residues 1761–1772 (TQPQLQPQKQQQ) and 1779–1791 (QQQQ…LLKQ). Disordered stretches follow at residues 1761-1791 (TQPQ…LLKQ) and 1809-1858 (SYKE…IASG). A Glycyl lysine isopeptide (Lys-Gly) (interchain with G-Cter in SUMO2) cross-link involves residue K1790. A compositionally biased stretch (basic and acidic residues) spans 1809–1845 (SYKEAEDISEKPEKPKQEFISEGEGLKEGKDTKKQKS). The C2H2-type 14 zinc finger occupies 1901–1924 (LECGTCGKLFSNVLILKSHQEHVH). The disordered stretch occupies residues 1948–2024 (YPISPSSPET…PPSAPPQVQL (77 aa)). Composition is skewed to pro residues over residues 1955–1974 (PETP…PPQP) and 1991–2019 (QAPP…PSAP). DNA-binding regions (homeobox) lie at residues 2084 to 2143 (FKRP…RQRN) and 2181 to 2240 (KRSS…RKSY). Residues 2267-2291 (YQCKKCNVVFPRIFDLITHQKKQCY) form a C2H2-type 15; degenerate zinc finger. Disordered regions lie at residues 2289 to 2311 (QCYK…MDAT) and 2328 to 2431 (AKNA…SPLQ). Acidic residues predominate over residues 2293–2309 (DEDDDAQDESQTEDSMD). Positions 2331 to 2345 (AAAPAASSGSGTSTP) are enriched in low complexity. The span at 2352 to 2370 (PEPEKTSPKPEYPAEKPKQ) shows a compositional bias: basic and acidic residues. A compositionally biased stretch (polar residues) spans 2419-2431 (SASQTPVPSSPLQ). The segment at 2448-2470 (YQCDQCTVAFPTLELWQEHQHMH) adopts a C2H2-type 16 zinc-finger fold. The segment covering 2507–2530 (LGSSLTQMPPQASSSHTTAPTTVA) has biased composition (polar residues). The interval 2507-2564 (LGSSLTQMPPQASSSHTTAPTTVAASLKRKLDDKEDNNCSEKEGGNSGEDQHRDKRLR) is disordered. Residues 2535–2559 (RKLDDKEDNNCSEKEGGNSGEDQHR) show a composition bias toward basic and acidic residues. Positions 2560–2619 (DKRLRTTITPEQLEILYEKYLLDSNPTRKMLDHIAREVGLKKRVVQVWFQNTRARERKGQ) form a DNA-binding region, homeobox 3. The C2H2-type 17 zinc-finger motif lies at 2630–2653 (KRCPFCRALFKAKSALESHIRSRH). S2663 bears the Phosphoserine mark. Residues 2764 to 2785 (AISDATTGDEGNTEMESTTGSS) show a composition bias toward polar residues. Disordered regions lie at residues 2764-2811 (AISD…TTPT) and 2829-2885 (HFND…PGHK). Positions 2830–2839 (FNDKDGDHDQ) are enriched in basic and acidic residues. Residues 2862-2874 (PSSPNPFGSSNPF) are compositionally biased toward low complexity. Positions 2884–2943 (HKRFRTQMSNLQLKVLKACFSDYRTPTMQECEMLGNEIGLPKRVVQVWFQNARAKEKKFK) form a DNA-binding region, homeobox 4. Residues 2962–2986 (PECTLCGVKYSARLSIRDHIFSKQH) form a C2H2-type 18 zinc finger. Residues 3092 to 3110 (SATSSPALSLSSAPTKPLL) show a composition bias toward low complexity. Disordered regions lie at residues 3092–3172 (SATS…KEEK) and 3281–3337 (LQKQ…LESK). Over residues 3111–3125 (QTPPPPPPPPPPPPS) the composition is skewed to pro residues. Residues 3126–3135 (SSLSGQQTEQ) are compositionally biased toward polar residues. Residues 3153–3172 (IKEEELEATKPEKHPKKEEK) show a composition bias toward basic and acidic residues. K3154 is covalently cross-linked (Glycyl lysine isopeptide (Lys-Gly) (interchain with G-Cter in SUMO2)). Residues 3265 to 3294 (ALLQQYQQYQQNLQESLQKQQKQQQEQQQK) are a coiled coil. The span at 3281-3293 (LQKQQKQQQEQQQ) shows a compositional bias: low complexity. The span at 3294-3314 (KPVQAKTSKVESDQPQNSNDA) shows a compositional bias: polar residues. The span at 3315–3337 (SETKEDKSTATESTKEEPQLESK) shows a compositional bias: basic and acidic residues. Residues 3354–3378 (FICRKCQMMFTDEDAAVNHQKSFCY) form a C2H2-type 19; degenerate zinc finger. Residues 3398-3422 (YQCLACDVAISGNEALSQHLQSSLH) form a C2H2-type 20 zinc finger. Disordered stretches follow at residues 3443 to 3462 (HSVC…AASS) and 3511 to 3534 (STSG…ELSQ). Low complexity predominate over residues 3447–3462 (SPNPNTTSTSQSAASS).

Belongs to the krueppel C2H2-type zinc-finger protein family. Expressed in brain, skeletal muscle and liver. Very low expression in stomach.

The protein resides in the nucleus. In terms of biological role, may play a role in neural and muscle differentiation. May be involved in transcriptional regulation. The protein is Zinc finger homeobox protein 4 (ZFHX4) of Homo sapiens (Human).